The following is a 671-amino-acid chain: UvrABC system protein C (671 aa).

One can recognise a GIY-YIG domain in the interval 16 to 95 (TTPGVYRFRD…IKEFKPRFNV (80 aa)). The UVR domain occupies 207–242 (KRFISRLEKDMAAAVAELDYERAAGLRDDIIALRKV).

It belongs to the UvrC family. Interacts with UvrB in an incision complex.

The protein resides in the cytoplasm. Its function is as follows. The UvrABC repair system catalyzes the recognition and processing of DNA lesions. UvrC both incises the 5' and 3' sides of the lesion. The N-terminal half is responsible for the 3' incision and the C-terminal half is responsible for the 5' incision. This is UvrABC system protein C from Paenarthrobacter aurescens (strain TC1).